We begin with the raw amino-acid sequence, 147 residues long: Protein-export protein SecB (147 aa).

It belongs to the SecB family. Homotetramer, a dimer of dimers. One homotetramer interacts with 1 SecA dimer.

Its subcellular location is the cytoplasm. One of the proteins required for the normal export of preproteins out of the cell cytoplasm. It is a molecular chaperone that binds to a subset of precursor proteins, maintaining them in a translocation-competent state. It also specifically binds to its receptor SecA. This chain is Protein-export protein SecB, found in Neisseria gonorrhoeae (strain ATCC 700825 / FA 1090).